Here is a 1624-residue protein sequence, read N- to C-terminus: Reverse gyrase (1624 aa).

The RG N-terminal-type zinc-finger motif lies at 1–42; sequence MKAIYRGMCPNCRGAITDERLSNKNPCEGCLSEPILSEDYNE. Cys-9, Cys-12, Cys-27, and Cys-30 together coordinate Zn(2+). ATP is bound by residues Gln-89 and 106–113; that span reads APTGMGKS. A Helicase ATP-binding domain is found at 93–256; it reads VKRIIRGKSF…KLKKQLAKLL (164 aa). The DEAD box signature appears at 213-216; it reads DDVD. The tract at residues 636 to 1624 is topoisomerase I; that stretch reads DLVKSALMIV…LYEEIKRYVR (989 aa). The Toprim domain occupies 640–803; it reads SALMIVESPN…NIKRIEFHEV (164 aa). Glu-646 contributes to the Mg(2+) binding site. The segment at 720–749 adopts an RG C-terminal-type zinc-finger fold; the sequence is IKRCRDCGHQFVDWEQKGVCPRCGSRNVHD. Residues Cys-723, Cys-726, Cys-739, and Cys-742 each coordinate Zn(2+). Asp-772 lines the Mg(2+) pocket. In terms of domain architecture, Topo IA-type catalytic spans 819–1623; it reads NEDRVNAQLV…ELYEEIKRYV (805 aa). The region spanning 1107 to 1222 is the DOD-type homing endonuclease domain; that stretch reads IFGVILGKGT…LSVYLYQIGI (116 aa). Tyr-1366 functions as the O-(5'-phospho-DNA)-tyrosine intermediate in the catalytic mechanism.

The protein in the N-terminal section; belongs to the DEAD box helicase family. DDVD subfamily. This sequence in the C-terminal section; belongs to the type IA topoisomerase family. Monomer. Zn(2+) serves as cofactor. Mg(2+) is required as a cofactor. Post-translationally, this protein undergoes a protein self splicing that involves a post-translational excision of the intervening region (intein) followed by peptide ligation.

Its subcellular location is the cytoplasm. The enzyme catalyses ATP + H2O = ADP + phosphate + H(+). Functionally, modifies the topological state of DNA by introducing positive supercoils in an ATP-dependent process, increasing the linking number in steps of +1. Binds to single-stranded DNA, transiently cleaves and then rejoins the ends, introducing a positive supercoil in the process. The scissile phosphodiester is attacked by the catalytic tyrosine of the enzyme, resulting in the formation of a DNA-(5'-phosphotyrosyl)-enzyme intermediate. Probably involved in rewinding DNA strands in regions of the chromosome that have opened up to allow replication, transcription, DNA repair and/or for DNA protection. This is Reverse gyrase from Pyrococcus horikoshii (strain ATCC 700860 / DSM 12428 / JCM 9974 / NBRC 100139 / OT-3).